We begin with the raw amino-acid sequence, 101 residues long: Small ribosomal subunit protein uS14 (101 aa).

The protein belongs to the universal ribosomal protein uS14 family. Part of the 30S ribosomal subunit. Contacts proteins S3 and S10.

In terms of biological role, binds 16S rRNA, required for the assembly of 30S particles and may also be responsible for determining the conformation of the 16S rRNA at the A site. This is Small ribosomal subunit protein uS14 from Synechococcus sp. (strain JA-2-3B'a(2-13)) (Cyanobacteria bacterium Yellowstone B-Prime).